Reading from the N-terminus, the 187-residue chain is RNA pyrophosphohydrolase (187 aa).

The region spanning Gly6 to Thr149 is the Nudix hydrolase domain. The Nudix box signature appears at Gly38–Gly59. Residues Ala166–Ser187 form a disordered region.

The protein belongs to the Nudix hydrolase family. RppH subfamily. A divalent metal cation is required as a cofactor.

Functionally, accelerates the degradation of transcripts by removing pyrophosphate from the 5'-end of triphosphorylated RNA, leading to a more labile monophosphorylated state that can stimulate subsequent ribonuclease cleavage. This chain is RNA pyrophosphohydrolase, found in Nitrosomonas europaea (strain ATCC 19718 / CIP 103999 / KCTC 2705 / NBRC 14298).